The primary structure comprises 523 residues: Arabinose import ATP-binding protein AraG (523 aa).

2 consecutive ABC transporter domains span residues 20–255 (LAFR…MVGR) and 268–511 (IGSE…MLRT). Position 52–59 (52–59 (GENGAGKS)) interacts with ATP.

The protein belongs to the ABC transporter superfamily. Arabinose importer (TC 3.A.1.2.2) family. In terms of assembly, the complex is composed of two ATP-binding proteins (AraG), two transmembrane proteins (AraH) and a solute-binding protein (AraF).

The protein resides in the cell inner membrane. The enzyme catalyses L-arabinose(out) + ATP + H2O = L-arabinose(in) + ADP + phosphate + H(+). Functionally, part of the ABC transporter complex AraFGH involved in arabinose import. Responsible for energy coupling to the transport system. The protein is Arabinose import ATP-binding protein AraG of Yersinia pestis bv. Antiqua (strain Antiqua).